The primary structure comprises 278 residues: MGLDLPNDNLIRGPLPEAHLDRLVDAVNARVDRGEPKVMLLTGASRGIGHATAKLFSEAGWRIISCARQPFDGERCPWEAGNDDHFQVDLGDHRMLPRAITEVKKRLAGAPLHALVNNAGVSPKTPTGDRMTSLTTSTDTWMRVFHLNLVAPILLAQGLFDELRAASGSIVNVTSIAGSRVHPFAGSAYATSKAALASLTRELAHDYAPHGIRVNAIAPGEIRTDMLSPDAEARVVASIPLRRVGTPDEVAKVIFFLCSDAASYVTGAEVPINGGQHL.

Position 40–64 (Leu-40–Ile-64) interacts with NAD(+). Residue Ser-175 participates in substrate binding. Tyr-189 (proton acceptor) is an active-site residue.

This sequence belongs to the short-chain dehydrogenases/reductases (SDR) family.

This Bradyrhizobium diazoefficiens (strain JCM 10833 / BCRC 13528 / IAM 13628 / NBRC 14792 / USDA 110) protein is Protein FixR (fixR).